The following is a 446-amino-acid chain: Putative zinc metalloprotease NMA0084 (446 aa).

Position 18 (H18) interacts with Zn(2+). E19 is an active-site residue. A Zn(2+)-binding site is contributed by H22. The next 3 helical transmembrane spans lie at 93–115 (IAIV…GLSF), 376–398 (FLAL…LDGG), and 419–438 (NIGL…VAFF). Residues 100-181 (PLTNLALAVL…KVAVGVQTAS (82 aa)) enclose the PDZ domain.

It belongs to the peptidase M50B family. Zn(2+) is required as a cofactor.

The protein localises to the cell inner membrane. The protein is Putative zinc metalloprotease NMA0084 of Neisseria meningitidis serogroup A / serotype 4A (strain DSM 15465 / Z2491).